The primary structure comprises 3088 residues: Protein prune homolog 2 (3088 aa).

N-acetylmethionine is present on Met-1. The short motif at 109–111 (GSS) is the DHH motif element. Disordered regions lie at residues 433–468 (IRSS…GLDS), 490–628 (HFDL…EPAS), 673–759 (SSEQ…QGTN), 771–795 (SGRS…AAVA), 846–909 (SELL…PKTR), 952–1080 (SNLG…SSYD), 1192–1211 (SDEH…NEKS), 1231–1371 (SFML…LVAS), 1413–1452 (RDVQ…GMNF), 1472–1491 (LEPE…SLDF), 1515–1585 (VKGS…QESE), 1632–1698 (DSFS…EESI), 1741–1768 (LDSS…DPWT), 1782–1813 (VEKE…KNED), 2089–2114 (ILTH…SEAK), 2173–2215 (YQAD…PDMA), 2240–2260 (QEPT…PESQ), 2492–2542 (SDLP…KNED), 2589–2667 (TQLA…SELG), 2687–2710 (ALEE…AGPD), 2814–2833 (QSEG…EIDI), and 2841–2875 (PDEA…AEEE). The span at 503-512 (SGQSQQSSHS) shows a compositional bias: low complexity. A compositionally biased stretch (basic and acidic residues) spans 562-582 (SLVEHDEEFVQRQDSPRDNSE). Polar residues-rich tracts occupy residues 613–625 (MNSL…STEE) and 673–684 (SSEQESVFQSPE). Over residues 685 to 699 (SWKEHKPSSIDRRAS) the composition is skewed to basic and acidic residues. Polar residues predominate over residues 750–759 (LPNTSPQGTN). Residues 846 to 857 (SELLDNSPSEIN) show a composition bias toward polar residues. Residues 865 to 876 (WGKKNNDSRDHI) are compositionally biased toward basic and acidic residues. Positions 881–894 (NPSSDLDHTWTNSK) are enriched in polar residues. Over residues 895 to 909 (PPKEDQNGLVDPKTR) the composition is skewed to basic and acidic residues. Positions 964–977 (DTNYSTSDSYTSPT) are enriched in low complexity. Positions 980–1000 (GDEKETEHKPFAKEEGFESKD) are enriched in basic and acidic residues. Polar residues-rich tracts occupy residues 1001-1027 (GNST…SSGP) and 1037-1048 (HTDNSSEINTTH). Composition is skewed to basic and acidic residues over residues 1049-1062 (NLDE…HTDG), 1192-1208 (SDEH…HTLN), 1282-1293 (HLDKQDTERETL), 1314-1339 (DPWK…RGHL), and 1425-1434 (QPKDTHEKHL). Residues 1436–1450 (SQRNSGETTETSDGM) show a composition bias toward polar residues. Over residues 1537–1585 (SSEYTHSSASSPELNDSSVALSSWGQQPSSGYQEENQGNWSEQNHQESE) the composition is skewed to polar residues. Acidic residues predominate over residues 1687-1698 (SDDDSVGGEESI). Over residues 1752–1768 (KSNPFCDNQQSSPDPWT) the composition is skewed to polar residues. Composition is skewed to basic and acidic residues over residues 2516–2542 (EKTI…KNED) and 2604–2622 (NERK…DTRS). The segment covering 2623–2632 (SFESPAQDQS) has biased composition (polar residues). The span at 2823–2833 (DNLDSPDEIDI) shows a compositional bias: acidic residues. One can recognise a CRAL-TRIO domain in the interval 2895 to 3056 (DMKVIEPYRR…SIIKLDEELR (162 aa)).

This sequence belongs to the PPase class C family. Prune subfamily. In terms of tissue distribution, a high level of expression seen in the nervous system (brain, cerebellum and spinal cord) as well as adrenal gland. Expressed at high levels in noneuroblastoma, rhabdomyosarcoma, melanoma and some osteosarcoma cell lines, whereas at only low levels in cancer cell lines of liver, breast, thyroid and colon. Expression is significantly higher in favorable tumors than aggressive ones.

The protein resides in the cytoplasm. Its function is as follows. May play an important role in regulating differentiation, survival and aggressiveness of the tumor cells. The polypeptide is Protein prune homolog 2 (PRUNE2) (Homo sapiens (Human)).